The sequence spans 289 residues: Extracellular ribonuclease (289 aa).

The signal sequence occupies residues 1–24; it reads MTKKLWFLPIVCLFFILGWTAPSA. A propeptide spanning residues 25–51 is cleaved from the precursor; it reads SAGAPADTNLYSRLAVSTAGGTTLFPQ. Positions 177-197 are disordered; sequence FDNGGSEYPKAPGNYYDGDSW.

Its subcellular location is the secreted. Functionally, mg(2+)-activated ribonuclease which hydrolyzes RNA apparently nonspecifically into oligonucleotides with 5'-terminal phosphate. This Bacillus amyloliquefaciens (Bacillus velezensis) protein is Extracellular ribonuclease (bsn).